The chain runs to 311 residues: Ribosomal RNA small subunit methyltransferase H (311 aa).

S-adenosyl-L-methionine contacts are provided by residues 34 to 36, Asp54, Phe80, Asp104, and Gln111; that span reads GGH.

This sequence belongs to the methyltransferase superfamily. RsmH family.

It is found in the cytoplasm. It catalyses the reaction cytidine(1402) in 16S rRNA + S-adenosyl-L-methionine = N(4)-methylcytidine(1402) in 16S rRNA + S-adenosyl-L-homocysteine + H(+). Its function is as follows. Specifically methylates the N4 position of cytidine in position 1402 (C1402) of 16S rRNA. The chain is Ribosomal RNA small subunit methyltransferase H from Teredinibacter turnerae (strain ATCC 39867 / T7901).